We begin with the raw amino-acid sequence, 283 residues long: Extracellular metalloprotease MGG_08041 (283 aa).

The first 22 residues, 1 to 22 (MQINVVKTFLFALAASSVSALA), serve as a signal peptide directing secretion. Asparagine 55 carries an N-linked (GlcNAc...) asparagine glycan. Histidine 197 serves as a coordination point for Zn(2+). The active site involves glutamate 198. Residue histidine 201 coordinates Zn(2+). Cysteine 233 and cysteine 260 are joined by a disulfide.

The protein belongs to the peptidase M43B family.

Its subcellular location is the secreted. Secreted metalloproteinase that allows assimilation of proteinaceous substrates. The protein is Extracellular metalloprotease MGG_08041 of Pyricularia oryzae (strain 70-15 / ATCC MYA-4617 / FGSC 8958) (Rice blast fungus).